We begin with the raw amino-acid sequence, 244 residues long: Transforming protein v-Fos/v-Fox (244 aa).

Residues 1 to 236 (DSLSYYHSPA…LFPASSGHSG (236 aa)) are transforming protein v-Fos. A bZIP domain is found at 113-176 (EVKRRIRRER…EKLEFILAAH (64 aa)). The basic motif stretch occupies residues 115–135 (KRRIRRERNKMAAAKCRNRRR). The interval 141-169 (LQAETDQLEDEKSALQTEIANLLKEKEKL) is leucine-zipper. A transforming protein v-Fox region spans residues 237-244 (FISMAGWQ).

The protein belongs to the bZIP family. Fos subfamily.

Its subcellular location is the host nucleus. The protein is Transforming protein v-Fos/v-Fox (FOS-FOX) of Mus musculus (Mouse).